Reading from the N-terminus, the 92-residue chain is MEVLPLVSGICCILGGIGVILHTNPINKIIMLALLEIGMIGLIVSCYYLDIAIVSSLCEPICTVILLLGYLKYLTTVKKKKRYGRNLPILSK.

Transmembrane regions (helical) follow at residues 1-21 (MEVL…GVIL), 29-49 (IIML…CYYL), and 51-71 (IAIV…LGYL).

The protein localises to the cell membrane. This is an uncharacterized protein from Methanocaldococcus jannaschii (strain ATCC 43067 / DSM 2661 / JAL-1 / JCM 10045 / NBRC 100440) (Methanococcus jannaschii).